The primary structure comprises 95 residues: Bombyxin F-1 (95 aa).

The N-terminal stretch at 1-19 (MKLVVIVLLVISVSILVSA) is a signal peptide. 3 cysteine pairs are disulfide-bonded: cysteine 29-cysteine 82, cysteine 41-cysteine 95, and cysteine 81-cysteine 86. Residues 53 to 71 (NSDMVYEDSGMPELLPADT) constitute a propeptide, c peptide like.

Belongs to the insulin family. As to quaternary structure, heterodimer of a B chain and an A chain linked by two disulfide bonds.

The protein localises to the secreted. This is Bombyxin F-1 (BBXF1) from Bombyx mori (Silk moth).